Consider the following 238-residue polypeptide: Hydroxyacylglutathione hydrolase (238 aa).

The Zn(2+) site is built by histidine 52, histidine 54, aspartate 56, histidine 57, histidine 108, aspartate 125, and histidine 163.

This sequence belongs to the metallo-beta-lactamase superfamily. Glyoxalase II family. In terms of assembly, monomer. Zn(2+) is required as a cofactor.

It carries out the reaction an S-(2-hydroxyacyl)glutathione + H2O = a 2-hydroxy carboxylate + glutathione + H(+). Its pathway is secondary metabolite metabolism; methylglyoxal degradation; (R)-lactate from methylglyoxal: step 2/2. Thiolesterase that catalyzes the hydrolysis of S-D-lactoyl-glutathione to form glutathione and D-lactic acid. This chain is Hydroxyacylglutathione hydrolase, found in Haemophilus influenzae (strain ATCC 51907 / DSM 11121 / KW20 / Rd).